Consider the following 349-residue polypeptide: MNSFSGSLEKAKTLTENNAPMVDPFGRAITYLRVSVTDRCDFRCTYCMSEHMTFLPKKDLLTLEELDRLCSVFITRGVRKLRLTGGEPLVRKNIMSLVRNLGRHVQSGTLDELTLTTNGSQLAKFAAELADCGVRRINVSLDTLDAQKFRQITRWGDIDRVMEGFDAAQAAGIKVKLNAVALKDFNDAEMPELMRFAHGRGMDLTVIETMPMGEIEEDRTDRYLPLSQLRADLERNFTLVDSDYQTGGPARYVTVKETGGRLGFITPMTHNFCESCNRVRLTCTGTLYMCLGQDDAADLRTALRASDSDAYLSAAIDEALLRKPKGHDFIIDRTHNRPAVSRHMSVTGG.

Residues 24–249 enclose the Radical SAM core domain; the sequence is PFGRAITYLR…VDSDYQTGGP (226 aa). Arg-33 serves as a coordination point for GTP. Residues Cys-40 and Cys-44 each contribute to the [4Fe-4S] cluster site. Tyr-46 contacts S-adenosyl-L-methionine. Residue Cys-47 coordinates [4Fe-4S] cluster. A GTP-binding site is contributed by Arg-82. Gly-86 provides a ligand contact to S-adenosyl-L-methionine. Residue Thr-116 participates in GTP binding. Ser-140 is an S-adenosyl-L-methionine binding site. GTP is bound at residue Lys-176. Position 210 (Met-210) interacts with S-adenosyl-L-methionine. Residues Cys-273 and Cys-276 each contribute to the [4Fe-4S] cluster site. A GTP-binding site is contributed by 278–280; it reads RVR. Cys-290 provides a ligand contact to [4Fe-4S] cluster.

This sequence belongs to the radical SAM superfamily. MoaA family. Monomer and homodimer. The cofactor is [4Fe-4S] cluster.

The catalysed reaction is GTP + AH2 + S-adenosyl-L-methionine = (8S)-3',8-cyclo-7,8-dihydroguanosine 5'-triphosphate + 5'-deoxyadenosine + L-methionine + A + H(+). The protein operates within cofactor biosynthesis; molybdopterin biosynthesis. In terms of biological role, catalyzes the cyclization of GTP to (8S)-3',8-cyclo-7,8-dihydroguanosine 5'-triphosphate. This Agrobacterium fabrum (strain C58 / ATCC 33970) (Agrobacterium tumefaciens (strain C58)) protein is GTP 3',8-cyclase.